Here is an 89-residue protein sequence, read N- to C-terminus: Small ribosomal subunit protein uS14 (89 aa).

This sequence belongs to the universal ribosomal protein uS14 family. Part of the 30S ribosomal subunit. Contacts proteins S3 and S10.

Functionally, binds 16S rRNA, required for the assembly of 30S particles and may also be responsible for determining the conformation of the 16S rRNA at the A site. This Leuconostoc mesenteroides subsp. mesenteroides (strain ATCC 8293 / DSM 20343 / BCRC 11652 / CCM 1803 / JCM 6124 / NCDO 523 / NBRC 100496 / NCIMB 8023 / NCTC 12954 / NRRL B-1118 / 37Y) protein is Small ribosomal subunit protein uS14.